The following is a 1328-amino-acid chain: ABC transporter C family member 7 (1328 aa).

The ABC transmembrane type-1 1 domain maps to 104-389 (HKTSIIVQIF…LPQAIQRLLS (286 aa)). The next 6 helical transmembrane spans lie at 112–132 (IFSA…ILYV), 140–160 (SFLV…FLSI), 224–244 (LILL…CWTI), 245–265 (GYSG…STFL), 287–307 (ISEM…LFFI), and 333–353 (MVVQ…YTLI). One can recognise an ABC transporter 1 domain in the interval 457-678 (IELVNNDSIE…FDFESIMKTK (222 aa)). Position 490–497 (490–497 (GVVGSGKS)) interacts with ATP. Positions 684–695 (LNNSNNNNNNNN) are enriched in low complexity. The disordered stretch occupies residues 684–708 (LNNSNNNNNNNNNKEEEEDVENLEK). Helical transmembrane passes span 762-782 (FIFF…FLLF), 802-822 (DSFY…FLGI), 894-914 (VLMM…LALF), 988-1008 (IGIK…FFSL), and 1014-1034 (GLSV…NWCI). In terms of domain architecture, ABC transmembrane type-1 2 spans 765 to 1046 (FFTMIMMYII…YIEFSMKMSS (282 aa)). The ABC transporter 2 domain occupies 1083–1316 (IQFKNVEIKY…INNQNSKFKK (234 aa)). Residue 1117–1124 (GKSGSGKS) coordinates ATP.

It belongs to the ABC transporter superfamily. ABCC family. Conjugate transporter (TC 3.A.1.208) subfamily.

The protein localises to the membrane. This chain is ABC transporter C family member 7 (abcC7), found in Dictyostelium discoideum (Social amoeba).